The following is a 550-amino-acid chain: Integral membrane protein DGCR2/IDD (550 aa).

Positions 1-20 are cleaved as a signal peptide; that stretch reads MVPKADSGAFLLLFLLVLTV. At 21–349 the chain is on the extracellular side; that stretch reads TEPLRPELRC…LFDSMASGMR (329 aa). The LDL-receptor class A domain occupies 28 to 68; that stretch reads LRCNPGQFACRSGTIQCIPLPWQCDGWATCEDESDEANCPE. 3 disulfides stabilise this stretch: C30–C44, C37–C57, and C51–C66. The segment at 69 to 92 is disordered; sequence VTGEVRPHHGKEAVDPRQGRARGG. Positions 71 to 92 are enriched in basic and acidic residues; that stretch reads GEVRPHHGKEAVDPRQGRARGG. One can recognise a C-type lectin domain in the interval 115–241; that stretch reads CPTGWHHYEG…FCAQLQCFHF (127 aa). Intrachain disulfides connect C145/C265 and C233/C257. N-linked (GlcNAc...) asparagine glycosylation is found at N149 and N196. Residues 270–333 form the VWFC domain; sequence TCVDIKDNVV…PKECCKFMCL (64 aa). Residues 350-368 form a helical membrane-spanning segment; it reads LVVSCISSFLILSLLLFMV. At 369-550 the chain is on the cytoplasmic side; that stretch reads HRLRQRRRER…HSRSSLNTVV (182 aa). Position 381 is a phosphoserine (S381). The tract at residues 500–550 is disordered; it reads AGASLADLEDSADSSSALLVPPDPAQSGSTPAAEALPGGGRHSRSSLNTVV.

As to expression, predominantly expressed in brain, heart, lung and fetal kidney. Low levels in liver and adult kidney.

It is found in the membrane. In terms of biological role, putative adhesion receptor, that could be involved in cell-cell or cell-matrix interactions required for normal cell differentiation and migration. This Homo sapiens (Human) protein is Integral membrane protein DGCR2/IDD (DGCR2).